The following is a 125-amino-acid chain: Large ribosomal subunit protein mL51 (125 aa).

The N-terminal 29 residues, Met-1–Leu-29, are a transit peptide targeting the mitochondrion.

The protein belongs to the mitochondrion-specific ribosomal protein mL51 family. As to quaternary structure, component of the mitochondrial ribosome large subunit (39S) which comprises a 16S rRNA and about 50 distinct proteins.

The protein localises to the mitochondrion. This chain is Large ribosomal subunit protein mL51 (mrpl51), found in Xenopus laevis (African clawed frog).